A 120-amino-acid chain; its full sequence is Large ribosomal subunit protein bL21 (120 aa).

Belongs to the bacterial ribosomal protein bL21 family. As to quaternary structure, part of the 50S ribosomal subunit. Contacts protein L20.

This protein binds to 23S rRNA in the presence of protein L20. The polypeptide is Large ribosomal subunit protein bL21 (Roseiflexus sp. (strain RS-1)).